We begin with the raw amino-acid sequence, 828 residues long: Periplasmic nitrate reductase (828 aa).

A signal peptide (tat-type signal) is located at residues 1–32 (MNLSRRDFMKTNAAVAAAAVAGLAIPVKNVEA). Residues 38-94 (IKWDKAPCRFCGTGCSVLVGTQNGRVVASQGDPDADVNRGLNCIKGYFLPKIMYGKD) enclose the 4Fe-4S Mo/W bis-MGD-type domain. [4Fe-4S] cluster-binding residues include Cys45, Cys48, Cys52, and Cys80. Mo-bis(molybdopterin guanine dinucleotide)-binding positions include Lys82, Gln149, Asn174, Cys178, 211–218 (WGSNMAEM), 242–246 (STFEH), 261–263 (QSD), Met372, Gln376, Asn482, 508–509 (SD), Lys531, Asp558, and 718–727 (TGRVLEHWHT). Phe794 is a binding site for substrate. Mo-bis(molybdopterin guanine dinucleotide) is bound by residues Asn802 and Lys819.

This sequence belongs to the prokaryotic molybdopterin-containing oxidoreductase family. NasA/NapA/NarB subfamily. As to quaternary structure, component of the periplasmic nitrate reductase NapAB complex composed of NapA and NapB. It depends on [4Fe-4S] cluster as a cofactor. Mo-bis(molybdopterin guanine dinucleotide) is required as a cofactor. In terms of processing, predicted to be exported by the Tat system. The position of the signal peptide cleavage has not been experimentally proven.

The protein resides in the periplasm. The catalysed reaction is 2 Fe(II)-[cytochrome] + nitrate + 2 H(+) = 2 Fe(III)-[cytochrome] + nitrite + H2O. Functionally, catalytic subunit of the periplasmic nitrate reductase complex NapAB. Receives electrons from NapB and catalyzes the reduction of nitrate to nitrite. The protein is Periplasmic nitrate reductase of Pasteurella multocida (strain Pm70).